Consider the following 665-residue polypeptide: Sodium-dependent phosphate transporter 1-B (665 aa).

6 helical membrane-spanning segments follow: residues 26-46, 67-87, 107-127, 163-183, 202-222, and 235-255; these read YMWL…SVGA, ACIL…AKVS, LMAG…AASF, IVAS…VLFY, ALPF…MFTG, and GVLL…WFAV. Disordered regions lie at residues 294–345 and 423–442; these read VPEE…APKT and ESEF…AQER. Over residues 296–306 the composition is skewed to low complexity; sequence EESSVLSSSTP. Residues 329–338 are compositionally biased toward basic and acidic residues; that stretch reads ADQKDCKESD. The next 4 membrane-spanning stretches (helical) occupy residues 499-519, 548-568, 588-608, and 638-658; these read VSML…FAHG, TPIW…WVWG, FSIE…GLPV, and IFMA…AIMA.

It belongs to the inorganic phosphate transporter (PiT) (TC 2.A.20) family.

Its subcellular location is the membrane. Its function is as follows. Sodium-phosphate symporter which plays a fundamental housekeeping role in phosphate transport. This is Sodium-dependent phosphate transporter 1-B (slc20a1b) from Danio rerio (Zebrafish).